The following is a 463-amino-acid chain: SPARC-related modular calcium-binding protein 1 (463 aa).

A signal peptide spans 1 to 25 (MLPARVRLLTPHLLLVLVQLSPAGG). In terms of domain architecture, Kazal-like spans 36-88 (SDRDPPCNPHCPRTQPKPICASDGRSYESMCEYQRAKCRDPALAVVHRGRCKD). Intrachain disulfides connect C42–C73, C46–C66, C55–C86, C94–C117, C128–C135, and C137–C157. Positions 91–157 (QSKCRLERAQ…SSVQNKTPVC (67 aa)) constitute a Thyroglobulin type-1 1 domain. N-linked (GlcNAc...) asparagine glycosylation occurs at N224. Positions 234–302 (VHSCDQERQS…TSTRYVMPSC (69 aa)) constitute a Thyroglobulin type-1 2 domain. Disulfide bonds link C237–C261, C272–C279, and C281–C302. EF-hand domains lie at 369 to 404 (LEERVAHWYFSQLDSNSSDDINKREMKPFKRYVKKK) and 406 to 441 (KPKKCARRFTDYCDLNKDKVISLPELKGCLGVSKEG). Ca(2+)-binding residues include D382, N384, S386, D388, E393, D419, N421, D423, and E430. N-linked (GlcNAc...) asparagine glycosylation occurs at N384.

Post-translationally, glycosylated. As to expression, widely expressed in many tissues with a strongest signal in ovary.

It is found in the secreted. The protein localises to the extracellular space. It localises to the extracellular matrix. The protein resides in the basement membrane. In terms of biological role, probable regulator of osteoblast differentiation. Plays essential roles in both eye and limb development. The protein is SPARC-related modular calcium-binding protein 1 (Smoc1) of Mus musculus (Mouse).